Here is a 651-residue protein sequence, read N- to C-terminus: Acetyl-coenzyme A synthetase (651 aa).

CoA-binding positions include 191–194, threonine 311, and asparagine 335; that span reads RGGK. Residues 387–389, 411–416, aspartate 500, and arginine 515 contribute to the ATP site; these read GEP and DTWWQT. Residue serine 523 participates in CoA binding. Residue arginine 526 participates in ATP binding. Positions 537, 539, and 542 each coordinate Mg(2+). Arginine 584 lines the CoA pocket. Residue lysine 609 is modified to N6-acetyllysine.

This sequence belongs to the ATP-dependent AMP-binding enzyme family. Mg(2+) serves as cofactor. In terms of processing, acetylated. Deacetylation by the SIR2-homolog deacetylase activates the enzyme.

It carries out the reaction acetate + ATP + CoA = acetyl-CoA + AMP + diphosphate. In terms of biological role, catalyzes the conversion of acetate into acetyl-CoA (AcCoA), an essential intermediate at the junction of anabolic and catabolic pathways. AcsA undergoes a two-step reaction. In the first half reaction, AcsA combines acetate with ATP to form acetyl-adenylate (AcAMP) intermediate. In the second half reaction, it can then transfer the acetyl group from AcAMP to the sulfhydryl group of CoA, forming the product AcCoA. The polypeptide is Acetyl-coenzyme A synthetase (Pseudomonas syringae pv. syringae (strain B728a)).